Consider the following 245-residue polypeptide: TPR repeat-containing protein PA4299 (245 aa).

An N-terminal signal peptide occupies residues 1 to 16 (MKALIGIGLCAALLGG). The N-palmitoyl cysteine moiety is linked to residue C17. Residue C17 is the site of S-diacylglycerol cysteine attachment. TPR repeat units lie at residues 100-133 (PEAH…RPTE), 135-167 (RFRN…QQGG), and 169-200 (LPAT…DARD). The disordered stretch occupies residues 210–245 (SWGAVPTPGAAPASDDPLAELPAEANMHTAMANEAP).

The protein localises to the cell membrane. In Pseudomonas aeruginosa (strain ATCC 15692 / DSM 22644 / CIP 104116 / JCM 14847 / LMG 12228 / 1C / PRS 101 / PAO1), this protein is TPR repeat-containing protein PA4299.